The sequence spans 246 residues: uncharacterized protein (246 aa).

4 consecutive transmembrane segments (helical) span residues 32–52 (TLFF…VGFI), 69–89 (IIAI…MCPF), 121–141 (IYFK…GVKI), and 146–166 (LAYL…MFFC). 2 4Fe-4S ferredoxin-type domains span residues 185–213 (FKLK…ITEK) and 210–239 (ITEK…FSAF). The [4Fe-4S] cluster site is built by cysteine 194, cysteine 197, cysteine 200, cysteine 204, cysteine 219, cysteine 222, cysteine 225, and cysteine 229.

It localises to the cell membrane. This is an uncharacterized protein from Methanocaldococcus jannaschii (strain ATCC 43067 / DSM 2661 / JAL-1 / JCM 10045 / NBRC 100440) (Methanococcus jannaschii).